The primary structure comprises 509 residues: Erythropoietin receptor (509 aa).

A signal peptide spans 1-24 (MYHFGATLWPGVGSLCLLLAGATW). Residues 25 to 251 (APSPNSPDAK…SLLTASDLDP (227 aa)) are Extracellular-facing. Disulfide bonds link cysteine 52-cysteine 62 and cysteine 91-cysteine 107. One can recognise a Fibronectin type-III domain in the interval 148 to 248 (PPAGLLARRA…EPASLLTASD (101 aa)). An N-linked (GlcNAc...) asparagine glycan is attached at asparagine 184. The short motif at 234 to 238 (WSAWS) is the WSXWS motif element. A helical membrane pass occupies residues 252–274 (LILTLSLILVLILLLLAVLALLS). The Cytoplasmic portion of the chain corresponds to 275 to 509 (HRRTLKQKIW…PSPPNYVTCS (235 aa)). Lysine 282 is covalently cross-linked (Glycyl lysine isopeptide (Lys-Gly) (interchain with G-Cter in ubiquitin)). Positions 283–291 (IWPGIPSPE) match the Box 1 motif motif. Residues tyrosine 369 and tyrosine 427 each carry the phosphotyrosine; by JAK2 modification. The short motif at 453 to 458 (LKYLYL) is the ITIM motif element. Lysine 454 is covalently cross-linked (Glycyl lysine isopeptide (Lys-Gly) (interchain with G-Cter in ubiquitin)). Phosphotyrosine; by JAK2 occurs at positions 455, 457, 469, 486, 490, and 505. The tract at residues 467 to 509 (TDYSSGGSQETQGGSSSGPYSNPYENSLVPAPEPSPPNYVTCS) is disordered. Residues 470 to 493 (SSGGSQETQGGSSSGPYSNPYENS) are compositionally biased toward low complexity.

It belongs to the type I cytokine receptor family. Type 1 subfamily. As to quaternary structure, forms homodimers on EPO stimulation. The tyrosine-phosphorylated form interacts with several SH2 domain-containing proteins including LYN, the adapter protein SH2B2, PTPN6, PTPN11, JAK2, PI3 kinases, STAT5A/B, SOCS3, CRKL. Interacts with INPP5D/SHIP1. SH2B2 binding inhibits the JAK-STAT signaling. Interacts with RHEX; this interaction occurs in a erythropoietin (EPO)-dependent manner. Interacts with ATXN2L. In terms of processing, on EPO stimulation, phosphorylated on C-terminal tyrosine residues by JAK2. The phosphotyrosine motifs are also recruitment sites for several SH2-containing proteins and adapter proteins which mediate cell proliferation. Phosphorylation on Tyr-455 is required for PTPN6 interaction, Tyr-427 for PTPN11. Tyr-427 is also required for SOCS3 binding, but Tyr-455/Tyr-457 motif is the preferred binding site. Ubiquitinated by the ECS(SOCS2) complex following ligand-binding and phosphorylation by JAK2, leading to its degradation by the proteasome. Regulation by the ECS(SOCS2) complex acts as a negative feedback loop of erythropoietin-mediated signaling pathway. Ubiquitination at Lys-282 mediates receptor internalization, whereas ubiquitination at Lys-454 promotes trafficking of activated receptors to the lysosomes for degradation. Ubiquitinated by NOSIP; appears to be either multi-monoubiquitinated or polyubiquitinated. Ubiquitination mediates proliferation and survival of EPO-dependent cells.

It localises to the cell membrane. In terms of biological role, receptor for erythropoietin, which mediates erythropoietin-induced erythroblast proliferation and differentiation. Upon EPO stimulation, EPOR dimerizes triggering the JAK2/STAT5 signaling cascade. In some cell types, can also activate STAT1 and STAT3. May also activate the LYN tyrosine kinase. Isoform EPOR-T acts as a dominant-negative receptor of EPOR-mediated signaling. The sequence is that of Erythropoietin receptor (EPOR) from Sus scrofa (Pig).